The following is a 232-amino-acid chain: Putative homeobox protein NANOG2 (232 aa).

The interval 1 to 39 is disordered; the sequence is MDLPIQDSHDSSTSPKGKQPTTAEKSATKKEDKVPVKKQ. A compositionally biased stretch (polar residues) spans 11–25; it reads SSTSPKGKQPTTAEK. Residues 26–35 are compositionally biased toward basic and acidic residues; it reads SATKKEDKVP. A run of 8 repeats spans residues 123–127, 128–132, 133–137, 143–147, 148–152, 153–157, 158–162, and 163–167. The tract at residues 123 to 167 is 8 X repeats starting with a Trp in each unit; sequence WSNQTWNNSTWSNQTQNIQSWSNHSWNTQTWCTQSWNNQAWNSPF. The tract at residues 123–167 is sufficient for transactivation activity; it reads WSNQTWNNSTWSNQTQNIQSWSNHSWNTQTWCTQSWNNQAWNSPF. The sufficient for strong transactivation activity stretch occupies residues 168–232; that stretch reads YNCGEESLQS…YSTNMXXEDV (65 aa).

This sequence belongs to the Nanog homeobox family.

The protein localises to the nucleus. Probable transcriptional regulator. In Pan paniscus (Pygmy chimpanzee), this protein is Putative homeobox protein NANOG2 (NANOGP1).